The chain runs to 525 residues: Squalene epoxidase 3 (525 aa).

A helical membrane pass occupies residues 9–29 (HCILTTTFVASLFAFLLLYVL). FAD-binding positions include 64-65 (VA), 84-85 (ER), Arg-92, Arg-163, Val-179, Asp-341, and Met-354. A run of 2 helical transmembrane segments spans residues 452-472 (LVLH…VPLP) and 477-497 (LWLG…IIKA).

This sequence belongs to the squalene monooxygenase family. The cofactor is FAD. In terms of tissue distribution, expressed in seedlings, leaves, stems, inflorescences and siliques.

Its subcellular location is the membrane. It catalyses the reaction squalene + reduced [NADPH--hemoprotein reductase] + O2 = (S)-2,3-epoxysqualene + oxidized [NADPH--hemoprotein reductase] + H2O + H(+). It participates in terpene metabolism; lanosterol biosynthesis; lanosterol from farnesyl diphosphate: step 2/3. Its function is as follows. Catalyzes the stereospecific oxidation of squalene to (S)-2,3-epoxysqualene, and is considered to be a rate-limiting enzyme in steroid biosynthesis. Can produce not only oxidosqualene, but also 2,3:22,23-dioxidosqualene. This Arabidopsis thaliana (Mouse-ear cress) protein is Squalene epoxidase 3 (SQE3).